The primary structure comprises 402 residues: Mannonate dehydratase 1 (402 aa).

The protein belongs to the mannonate dehydratase family. The cofactor is Fe(2+). It depends on Mn(2+) as a cofactor.

The enzyme catalyses D-mannonate = 2-dehydro-3-deoxy-D-gluconate + H2O. The protein operates within carbohydrate metabolism; pentose and glucuronate interconversion. Functionally, catalyzes the dehydration of D-mannonate. The sequence is that of Mannonate dehydratase 1 (uxuA1) from Agrobacterium fabrum (strain C58 / ATCC 33970) (Agrobacterium tumefaciens (strain C58)).